The following is a 285-amino-acid chain: MSIVLRLLSVLKHQQNKMQPELSVSNYRLLDYSMEWSSSSVAALPTSSEKTVMMPAKATSSRKRHRKPKLQYAKRRFSPVNPNDLVLVRQEPTHCVRLVFPLSKRWIHFDGLVYSLARLNVSMTVDYHVTLALIHAPEAGECFGNLLHLTPLLKDCLLEFKKLCILGKTLTILASEWPFFTGVKKNKDNLTFPKAVEWLKEHGYEIYHSQLPLHMSLAKLHDLPQAQFTEAVGLCHYFDPREFALPCALEVVKIGGGKVNGRSIPLVRFPINNEFKFIPYLYQCA.

This Bat coronavirus 133/2005 (BtCoV) protein is Non-structural protein 3c.